Consider the following 318-residue polypeptide: NADH-quinone oxidoreductase subunit H 2 (318 aa).

9 helical membrane-spanning segments follow: residues 4–24, 77–97, 106–126, 146–166, 179–199, 214–234, 238–258, 262–282, and 293–313; these read LLIA…AGVF, LAPA…AFAP, VGVL…VLGA, LAYE…AGSF, LWFI…GLAA, LVAG…FLGE, ILLV…GPIL, VWFG…RAAL, and FAWK…AWIA.

It belongs to the complex I subunit 1 family. As to quaternary structure, NDH-1 is composed of 14 different subunits. Subunits NuoA, H, J, K, L, M, N constitute the membrane sector of the complex.

Its subcellular location is the cell inner membrane. The enzyme catalyses a quinone + NADH + 5 H(+)(in) = a quinol + NAD(+) + 4 H(+)(out). In terms of biological role, NDH-1 shuttles electrons from NADH, via FMN and iron-sulfur (Fe-S) centers, to quinones in the respiratory chain. The immediate electron acceptor for the enzyme in this species is believed to be ubiquinone. Couples the redox reaction to proton translocation (for every two electrons transferred, four hydrogen ions are translocated across the cytoplasmic membrane), and thus conserves the redox energy in a proton gradient. This subunit may bind ubiquinone. The sequence is that of NADH-quinone oxidoreductase subunit H 2 from Cereibacter sphaeroides (strain ATCC 17029 / ATH 2.4.9) (Rhodobacter sphaeroides).